Consider the following 325-residue polypeptide: Protein ORANGE-GREEN, chloroplastic (325 aa).

The transit peptide at 1–54 (MDRVLVASYPINHLIRPHSFRIDYCWSTCFTSRLNSGKERQKLSSRWRWRSMAS) directs the protein to the chloroplast. A compositionally biased stretch (low complexity) spans 53–71 (ASDSTDSSSSSSFAPSVES). The segment at 53–77 (ASDSTDSSSSSSFAPSVESDPSDKT) is disordered. 2 helical membrane-spanning segments follow: residues 164-184 (LYYV…GLLA) and 217-237 (IVAS…VVEV). Residues 226-317 (VGVISALMVV…CTGMAMASEH (92 aa)) are CR-type-like. One copy of the CXXCXGXG motif repeat lies at 248-255 (CKYCLGTG). The stretch at 259-266 (CARCSNTG) is one CXXCXXXG motif repeat. One copy of the CXXCXGXG motif repeat lies at 292-299 (CQNCSGSG). The stretch at 303–310 (CPTCLCTG) is one CXXCXXXG motif repeat.

This sequence belongs to the orange-like family.

The protein resides in the plastid. The protein localises to the chloroplast membrane. Involved in chloroplast differentiation in fruit flesh. This chain is Protein ORANGE-GREEN, chloroplastic, found in Cucumis melo (Muskmelon).